The chain runs to 254 residues: Ribosomal RNA small subunit methyltransferase J (254 aa).

Residues 107–108, 123–124, and Asp177 each bind S-adenosyl-L-methionine; these read RD and ER.

Belongs to the methyltransferase superfamily. RsmJ family.

It localises to the cytoplasm. The enzyme catalyses guanosine(1516) in 16S rRNA + S-adenosyl-L-methionine = N(2)-methylguanosine(1516) in 16S rRNA + S-adenosyl-L-homocysteine + H(+). Functionally, specifically methylates the guanosine in position 1516 of 16S rRNA. This is Ribosomal RNA small subunit methyltransferase J from Histophilus somni (strain 2336) (Haemophilus somnus).